The following is a 116-amino-acid chain: Protein lin-52 homolog (116 aa).

Phosphoserine is present on residues serine 28 and serine 53.

This sequence belongs to the lin-52 family. Component of the DREAM complex (also named LINC complex) at least composed of E2F4, E2F5, LIN9, LIN37, LIN52, LIN54, MYBL1, MYBL2, RBL1, RBL2, RBBP4, TFDP1 and TFDP2. The complex exists in quiescent cells where it represses cell cycle-dependent genes. It dissociates in S phase when LIN9, LIN37, LIN52 and LIN54 form a subcomplex that binds to MYBL2.

This Homo sapiens (Human) protein is Protein lin-52 homolog (LIN52).